The chain runs to 148 residues: Ubiquitin-conjugating enzyme E2 30 (148 aa).

One can recognise a UBC core domain in the interval 1–147 (MASKRINKEL…AQSWTQKYAM (147 aa)). The active-site Glycyl thioester intermediate is cysteine 85.

This sequence belongs to the ubiquitin-conjugating enzyme family. As to quaternary structure, interacts with RGLG3 and RGLG4. In terms of tissue distribution, ubiquitously expressed at very low levels.

It catalyses the reaction S-ubiquitinyl-[E1 ubiquitin-activating enzyme]-L-cysteine + [E2 ubiquitin-conjugating enzyme]-L-cysteine = [E1 ubiquitin-activating enzyme]-L-cysteine + S-ubiquitinyl-[E2 ubiquitin-conjugating enzyme]-L-cysteine.. It functions in the pathway protein modification; protein ubiquitination. Accepts the ubiquitin from the E1 complex and catalyzes its covalent attachment to other proteins. The protein is Ubiquitin-conjugating enzyme E2 30 (UBC30) of Arabidopsis thaliana (Mouse-ear cress).